Consider the following 123-residue polypeptide: Small ribosomal subunit protein uS12 (123 aa).

The residue at position 89 (Asp-89) is a 3-methylthioaspartic acid.

The protein belongs to the universal ribosomal protein uS12 family. In terms of assembly, part of the 30S ribosomal subunit. Contacts proteins S8 and S17. May interact with IF1 in the 30S initiation complex.

Its function is as follows. With S4 and S5 plays an important role in translational accuracy. Interacts with and stabilizes bases of the 16S rRNA that are involved in tRNA selection in the A site and with the mRNA backbone. Located at the interface of the 30S and 50S subunits, it traverses the body of the 30S subunit contacting proteins on the other side and probably holding the rRNA structure together. The combined cluster of proteins S8, S12 and S17 appears to hold together the shoulder and platform of the 30S subunit. This chain is Small ribosomal subunit protein uS12, found in Afipia carboxidovorans (strain ATCC 49405 / DSM 1227 / KCTC 32145 / OM5) (Oligotropha carboxidovorans).